The sequence spans 100 residues: MHLSPQEKDKLLIFSAALLAERRLNRGLKLNYPESIAFLSFQVLEGARDGKSVSQLMSEGTTWLSKSQVMEGIPEMVHEVQIEAVFPDGTKLVTIHNPIN.

It belongs to the urease gamma subunit family. As to quaternary structure, heterotrimer of UreA (gamma), UreB (beta) and UreC (alpha) subunits. Three heterotrimers associate to form the active enzyme.

The protein localises to the cytoplasm. The catalysed reaction is urea + 2 H2O + H(+) = hydrogencarbonate + 2 NH4(+). Its pathway is nitrogen metabolism; urea degradation; CO(2) and NH(3) from urea (urease route): step 1/1. This is Urease subunit gamma from Prochlorococcus marinus (strain MIT 9312).